The primary structure comprises 294 residues: 4-hydroxy-tetrahydrodipicolinate synthase (294 aa).

T45 contributes to the pyruvate binding site. Catalysis depends on Y133, which acts as the Proton donor/acceptor. K162 acts as the Schiff-base intermediate with substrate in catalysis. I204 is a pyruvate binding site.

The protein belongs to the DapA family. As to quaternary structure, homotetramer; dimer of dimers.

The protein localises to the cytoplasm. It carries out the reaction L-aspartate 4-semialdehyde + pyruvate = (2S,4S)-4-hydroxy-2,3,4,5-tetrahydrodipicolinate + H2O + H(+). It functions in the pathway amino-acid biosynthesis; L-lysine biosynthesis via DAP pathway; (S)-tetrahydrodipicolinate from L-aspartate: step 3/4. Functionally, catalyzes the condensation of (S)-aspartate-beta-semialdehyde [(S)-ASA] and pyruvate to 4-hydroxy-tetrahydrodipicolinate (HTPA). This Bartonella tribocorum (strain CIP 105476 / IBS 506) protein is 4-hydroxy-tetrahydrodipicolinate synthase.